Reading from the N-terminus, the 208-residue chain is GTP cyclohydrolase 1 (208 aa).

Zn(2+) contacts are provided by C89, H92, and C163.

The protein belongs to the GTP cyclohydrolase I family. In terms of assembly, homomer.

The enzyme catalyses GTP + H2O = 7,8-dihydroneopterin 3'-triphosphate + formate + H(+). It functions in the pathway cofactor biosynthesis; 7,8-dihydroneopterin triphosphate biosynthesis; 7,8-dihydroneopterin triphosphate from GTP: step 1/1. The polypeptide is GTP cyclohydrolase 1 (Saccharolobus islandicus (strain Y.N.15.51 / Yellowstone #2) (Sulfolobus islandicus)).